The sequence spans 149 residues: Protein cornichon homolog 2 (149 aa).

The next 3 helical transmembrane spans lie at 3 to 23, 59 to 79, and 117 to 137; these read IELI…GLTA, ALCA…MAPV, and YFSL…TLFI.

This sequence belongs to the cornichon family.

It localises to the endoplasmic reticulum membrane. The protein localises to the golgi apparatus membrane. Acts as a cargo receptor necessary for the transportation of secretory proteins from the endoplasmic reticulum (ER) in COPII-coated vesicles targeted to the Golgi apparatus. In Oryza sativa subsp. japonica (Rice), this protein is Protein cornichon homolog 2.